Here is a 263-residue protein sequence, read N- to C-terminus: Acyl-[acyl-carrier-protein]--UDP-N-acetylglucosamine O-acyltransferase (263 aa).

This sequence belongs to the transferase hexapeptide repeat family. LpxA subfamily. In terms of assembly, homotrimer.

The protein localises to the cytoplasm. It catalyses the reaction a (3R)-hydroxyacyl-[ACP] + UDP-N-acetyl-alpha-D-glucosamine = a UDP-3-O-[(3R)-3-hydroxyacyl]-N-acetyl-alpha-D-glucosamine + holo-[ACP]. It functions in the pathway glycolipid biosynthesis; lipid IV(A) biosynthesis; lipid IV(A) from (3R)-3-hydroxytetradecanoyl-[acyl-carrier-protein] and UDP-N-acetyl-alpha-D-glucosamine: step 1/6. In terms of biological role, involved in the biosynthesis of lipid A, a phosphorylated glycolipid that anchors the lipopolysaccharide to the outer membrane of the cell. In Campylobacter jejuni (strain RM1221), this protein is Acyl-[acyl-carrier-protein]--UDP-N-acetylglucosamine O-acyltransferase.